Reading from the N-terminus, the 492-residue chain is Glutamyl-tRNA(Gln) amidotransferase subunit A, mitochondrial (492 aa).

Residues Lys-78 and Ser-159 each act as charge relay system in the active site. Ser-183 functions as the Acyl-ester intermediate in the catalytic mechanism.

It belongs to the amidase family. GatA subfamily. In terms of assembly, subunit of the heterotrimeric GatCAB amidotransferase (AdT) complex, composed of A, B and C subunits.

Its subcellular location is the mitochondrion. It carries out the reaction L-glutamyl-tRNA(Gln) + L-glutamine + ATP + H2O = L-glutaminyl-tRNA(Gln) + L-glutamate + ADP + phosphate + H(+). Functionally, allows the formation of correctly charged Gln-tRNA(Gln) through the transamidation of misacylated Glu-tRNA(Gln) in the mitochondria. The reaction takes place in the presence of glutamine and ATP through an activated gamma-phospho-Glu-tRNA(Gln). The protein is Glutamyl-tRNA(Gln) amidotransferase subunit A, mitochondrial of Anopheles gambiae (African malaria mosquito).